A 383-amino-acid polypeptide reads, in one-letter code: Adaptive-response sensory kinase SasA (383 aa).

The Histidine kinase domain occupies 152 to 365; sequence MVAHELRTPL…CFTFTVPIWQ (214 aa). His-155 carries the phosphohistidine; by autocatalysis modification.

As to quaternary structure, homooligomerizes. Interacts with KaiC. Participates in the KaiABC clock complex, whose core is composed of a KaiC homohexamer, 6 KaiB and up to 6 KaiA dimers. SasA and KaiB(fs) compete to bind to KaiC.

It carries out the reaction ATP + protein L-histidine = ADP + protein N-phospho-L-histidine.. Member of the two-component regulatory system SasA/RpaA involved in genome-wide circadian gene expression. One of several clock output pathways. Participates in the Kai clock protein complex, the main circadian regulator in cyanobacteria, via its interaction with KaiC. KaiC enhances the autophosphorylation activity of SasA, which then transfers its phosphate group to RpaA to activate it. In addition to its output function, recruits fold-shifted KaiB (KaiB(fs)) to KaiC to cooperatively form the KaiB(6):KaiC(6) complex (independent of SasA kinase activity). Required for robustness of the circadian rhythm of gene expression and is involved in clock output, also required for adaptation to light/dark cycles. This chain is Adaptive-response sensory kinase SasA, found in Synechococcus sp. (strain CC9902).